The sequence spans 831 residues: Cadherin-related family member 5 (831 aa).

The first 28 residues, 1–28 (MGAPALLWPSLLLPWLTVLFGQPPGTLA), serve as a signal peptide directing secretion. At 29–641 (QTQVCSVNQT…GQRFSTVDMA (613 aa)) the chain is on the extracellular side. N-linked (GlcNAc...) asparagine glycosylation is found at N36, N45, N84, N135, N143, N173, N201, N287, N311, N408, and N475. Cadherin domains lie at 53–125 (VNIF…DNAP), 128–240 (SFEI…TPWF), 252–357 (IHAQ…PLQF), and 358–459 (SQSL…ERER). Positions 452–632 (IQVSERERTP…STGAGEQGDG (181 aa)) are disordered. Residues 473–491 (SSNTTMEAPLTSGTSQRPA) show a composition bias toward polar residues. Over residues 505-540 (GGTTLRPPTPASSIPGGSPTLGTSTSPQTTTPGGDS) the composition is skewed to low complexity. Over residues 541 to 554 (AQTPKPGTSHPTAP) the composition is skewed to polar residues. 2 tandem repeats follow at residues 541–571 (AQTPKPGTSHPTAPTSRTSTSLMTTSSRSDS) and 572–602 (TQTPKPGTSQPMVPIPGASTSSQPATPSGSS). A 3 X 31 AA approximate tandem repeats region spans residues 541-614 (AQTPKPGTSH…TPKPGTSQST (74 aa)). Positions 555 to 572 (TSRTSTSLMTTSSRSDST) are enriched in low complexity. Polar residues-rich tracts occupy residues 573-582 (QTPKPGTSQP) and 589-623 (ASTSSQPATPSGSSPQTPKPGTSQSTATGPISLPS). One copy of the 3; truncated repeat lies at 605 to 614 (TPKPGTSQST). Residues 642–662 (VLGGVLGALLLLALICLVILV) traverse the membrane as a helical segment. Topologically, residues 663–831 (HKHYRHRLAC…FGVDADNTYI (169 aa)) are cytoplasmic. Residues 663-831 (HKHYRHRLAC…FGVDADNTYI (169 aa)) are mediates interaction with USH1C and MYO7B and is required for proper localization to microvilli tips and function in microvilli organization. Disordered regions lie at residues 675–774 (GKAS…GGYK) and 793–831 (EPTADVDSASASGSEGSDDDDPDQKKTLRFGVDADNTYI). S699, S721, and S725 each carry phosphoserine. Over residues 716 to 738 (PLRPPSPMSSSPTPPSSTPPSPQ) the composition is skewed to pro residues. T728 is modified (phosphothreonine). Residues S736 and S753 each carry the phosphoserine modification. A compositionally biased stretch (basic and acidic residues) spans 761 to 771 (LTKERRPEGEG). At T795 the chain carries Phosphothreonine. Residues 797-807 (DVDSASASGSE) are compositionally biased toward low complexity. Residues S802, S804, and S806 each carry the phosphoserine modification.

As to quaternary structure, part of the IMAC/intermicrovillar adhesion complex/intermicrovillar tip-link complex composed of ANKS4B, MYO7B, USH1C, CDHR2 and CDHR5. Interacts (via cytoplasmic domain) with USH1C and MYO7B; required for proper localization of CDHR5 to microvilli tips and its function in brush border differentiation. N- and O-glycosylated.

It localises to the apical cell membrane. It is found in the cell projection. The protein resides in the microvillus membrane. Its function is as follows. Intermicrovillar adhesion molecule that forms, via its extracellular domain, calcium-dependent heterophilic complexes with CDHR2 on adjacent microvilli. Thereby, controls the packing of microvilli at the apical membrane of epithelial cells. Through its cytoplasmic domain, interacts with microvillus cytoplasmic proteins to form the intermicrovillar adhesion complex/IMAC. This complex plays a central role in microvilli and epithelial brush border differentiation. This Mus musculus (Mouse) protein is Cadherin-related family member 5.